A 230-amino-acid polypeptide reads, in one-letter code: Cytochrome c oxidase subunit 2 (230 aa).

Residues 1–14 (MAHPSQLGFQDAAS) lie on the Mitochondrial intermembrane side of the membrane. The chain crosses the membrane as a helical span at residues 15-45 (PVMEELLHFHDHALMIVFLISTLVLYIIAAT). Over 46 to 59 (ASTKLTDKYILDSQ) the chain is Mitochondrial matrix. Residues 60 to 87 (EIEVIWTIMPAVILILIALPSLRILYLM) traverse the membrane as a helical segment. Topologically, residues 88 to 230 (DEINDPHLTV…NWSSLMLEDA (143 aa)) are mitochondrial intermembrane. Cu cation-binding residues include H161, C196, E198, C200, H204, and M207. E198 is a Mg(2+) binding site.

Belongs to the cytochrome c oxidase subunit 2 family. As to quaternary structure, component of the cytochrome c oxidase (complex IV, CIV), a multisubunit enzyme composed of 14 subunits. The complex is composed of a catalytic core of 3 subunits MT-CO1, MT-CO2 and MT-CO3, encoded in the mitochondrial DNA, and 11 supernumerary subunits COX4I, COX5A, COX5B, COX6A, COX6B, COX6C, COX7A, COX7B, COX7C, COX8 and NDUFA4, which are encoded in the nuclear genome. The complex exists as a monomer or a dimer and forms supercomplexes (SCs) in the inner mitochondrial membrane with NADH-ubiquinone oxidoreductase (complex I, CI) and ubiquinol-cytochrome c oxidoreductase (cytochrome b-c1 complex, complex III, CIII), resulting in different assemblies (supercomplex SCI(1)III(2)IV(1) and megacomplex MCI(2)III(2)IV(2)). Found in a complex with TMEM177, COA6, COX18, COX20, SCO1 and SCO2. Interacts with TMEM177 in a COX20-dependent manner. Interacts with COX20. Interacts with COX16. The cofactor is Cu cation.

The protein localises to the mitochondrion inner membrane. The enzyme catalyses 4 Fe(II)-[cytochrome c] + O2 + 8 H(+)(in) = 4 Fe(III)-[cytochrome c] + 2 H2O + 4 H(+)(out). Functionally, component of the cytochrome c oxidase, the last enzyme in the mitochondrial electron transport chain which drives oxidative phosphorylation. The respiratory chain contains 3 multisubunit complexes succinate dehydrogenase (complex II, CII), ubiquinol-cytochrome c oxidoreductase (cytochrome b-c1 complex, complex III, CIII) and cytochrome c oxidase (complex IV, CIV), that cooperate to transfer electrons derived from NADH and succinate to molecular oxygen, creating an electrochemical gradient over the inner membrane that drives transmembrane transport and the ATP synthase. Cytochrome c oxidase is the component of the respiratory chain that catalyzes the reduction of oxygen to water. Electrons originating from reduced cytochrome c in the intermembrane space (IMS) are transferred via the dinuclear copper A center (CU(A)) of subunit 2 and heme A of subunit 1 to the active site in subunit 1, a binuclear center (BNC) formed by heme A3 and copper B (CU(B)). The BNC reduces molecular oxygen to 2 water molecules using 4 electrons from cytochrome c in the IMS and 4 protons from the mitochondrial matrix. The polypeptide is Cytochrome c oxidase subunit 2 (mt-co2) (Tetraodon nigroviridis (Spotted green pufferfish)).